Here is a 921-residue protein sequence, read N- to C-terminus: Isoleucine--tRNA ligase (921 aa).

Residues 57–67 carry the 'HIGH' region motif; the sequence is PYANGDIHMGH. L-isoleucyl-5'-AMP is bound at residue glutamate 552. A 'KMSKS' region motif is present at residues 593–597; the sequence is KMSKS. Lysine 596 contacts ATP. Residues cysteine 888, cysteine 891, cysteine 908, and cysteine 911 each contribute to the Zn(2+) site.

The protein belongs to the class-I aminoacyl-tRNA synthetase family. IleS type 1 subfamily. In terms of assembly, monomer. Zn(2+) serves as cofactor.

Its subcellular location is the cytoplasm. The catalysed reaction is tRNA(Ile) + L-isoleucine + ATP = L-isoleucyl-tRNA(Ile) + AMP + diphosphate. Catalyzes the attachment of isoleucine to tRNA(Ile). As IleRS can inadvertently accommodate and process structurally similar amino acids such as valine, to avoid such errors it has two additional distinct tRNA(Ile)-dependent editing activities. One activity is designated as 'pretransfer' editing and involves the hydrolysis of activated Val-AMP. The other activity is designated 'posttransfer' editing and involves deacylation of mischarged Val-tRNA(Ile). The polypeptide is Isoleucine--tRNA ligase (Bacillus cereus (strain G9842)).